A 239-amino-acid chain; its full sequence is Skn-1 dependent zygotic transcript 1 protein (239 aa).

Its function is as follows. May have a role in mesendoderm development during embryogenesis. This Caenorhabditis briggsae protein is Skn-1 dependent zygotic transcript 1 protein.